A 379-amino-acid polypeptide reads, in one-letter code: Chaperone protein DnaJ (379 aa).

A J domain is found at 5-69 (DYYEVLGISK…NKRATIDQFG (65 aa)). The CR-type zinc finger occupies 136–218 (GTTKEISIRK…CHGKGTENKT (83 aa)). Residues Cys149, Cys152, Cys166, Cys169, Cys192, Cys195, Cys206, and Cys209 each coordinate Zn(2+). CXXCXGXG motif repeat units lie at residues 149 to 156 (CETCHGDG), 166 to 173 (CSYCNGAG), 192 to 199 (CPKCNGSG), and 206 to 213 (CPTCHGKG).

The protein belongs to the DnaJ family. As to quaternary structure, homodimer. It depends on Zn(2+) as a cofactor.

The protein resides in the cytoplasm. Participates actively in the response to hyperosmotic and heat shock by preventing the aggregation of stress-denatured proteins and by disaggregating proteins, also in an autonomous, DnaK-independent fashion. Unfolded proteins bind initially to DnaJ; upon interaction with the DnaJ-bound protein, DnaK hydrolyzes its bound ATP, resulting in the formation of a stable complex. GrpE releases ADP from DnaK; ATP binding to DnaK triggers the release of the substrate protein, thus completing the reaction cycle. Several rounds of ATP-dependent interactions between DnaJ, DnaK and GrpE are required for fully efficient folding. Also involved, together with DnaK and GrpE, in the DNA replication of plasmids through activation of initiation proteins. This is Chaperone protein DnaJ from Staphylococcus aureus.